We begin with the raw amino-acid sequence, 438 residues long: Gamma-glutamyl phosphate reductase (438 aa).

The tract at residues 1-21 (MTAQTSSDVTDQKTDLTRESE) is disordered. The segment covering 10–21 (TDQKTDLTRESE) has biased composition (basic and acidic residues).

The protein belongs to the gamma-glutamyl phosphate reductase family.

The protein localises to the cytoplasm. It catalyses the reaction L-glutamate 5-semialdehyde + phosphate + NADP(+) = L-glutamyl 5-phosphate + NADPH + H(+). It participates in amino-acid biosynthesis; L-proline biosynthesis; L-glutamate 5-semialdehyde from L-glutamate: step 2/2. Catalyzes the NADPH-dependent reduction of L-glutamate 5-phosphate into L-glutamate 5-semialdehyde and phosphate. The product spontaneously undergoes cyclization to form 1-pyrroline-5-carboxylate. The sequence is that of Gamma-glutamyl phosphate reductase from Corynebacterium efficiens (strain DSM 44549 / YS-314 / AJ 12310 / JCM 11189 / NBRC 100395).